A 260-amino-acid polypeptide reads, in one-letter code: Phosphatidylglycerol--prolipoprotein diacylglyceryl transferase (260 aa).

A run of 4 helical transmembrane segments spans residues 17–37, 52–72, 85–105, and 113–133; these read VVKW…SWIF, LTAA…LHVI, ILSG…IGLW, and FNLG…QAIG. A 1,2-diacyl-sn-glycero-3-phospho-(1'-sn-glycerol) is bound at residue R134. The next 3 helical transmembrane spans lie at 170–190, 198–218, and 227–247; these read VPTQ…SLFI, GQLF…IGFV, and GLEQ…PFFI.

It belongs to the Lgt family.

It is found in the cell membrane. The enzyme catalyses L-cysteinyl-[prolipoprotein] + a 1,2-diacyl-sn-glycero-3-phospho-(1'-sn-glycerol) = an S-1,2-diacyl-sn-glyceryl-L-cysteinyl-[prolipoprotein] + sn-glycerol 1-phosphate + H(+). The protein operates within protein modification; lipoprotein biosynthesis (diacylglyceryl transfer). Catalyzes the transfer of the diacylglyceryl group from phosphatidylglycerol to the sulfhydryl group of the N-terminal cysteine of a prolipoprotein, the first step in the formation of mature lipoproteins. The polypeptide is Phosphatidylglycerol--prolipoprotein diacylglyceryl transferase (Dehalococcoides mccartyi (strain ATCC BAA-2266 / KCTC 15142 / 195) (Dehalococcoides ethenogenes (strain 195))).